Here is a 1581-residue protein sequence, read N- to C-terminus: Laminin subunit gamma-3 (1581 aa).

A signal peptide spans 1–28 (MAVSRVLSLLATVASMALVIQETHFAAG). The Laminin N-terminal domain occupies 40-279 (RAQRCLPEFE…AVSDFSVGGR (240 aa)). N-linked (GlcNAc...) asparagine glycosylation occurs at asparagine 128. Cystine bridges form between cysteine 280–cysteine 289, cysteine 282–cysteine 299, cysteine 301–cysteine 310, cysteine 313–cysteine 333, cysteine 336–cysteine 345, cysteine 338–cysteine 361, cysteine 364–cysteine 373, cysteine 376–cysteine 389, cysteine 392–cysteine 404, cysteine 394–cysteine 410, cysteine 412–cysteine 421, cysteine 424–cysteine 436, cysteine 439–cysteine 450, cysteine 441–cysteine 457, cysteine 459–cysteine 468, and cysteine 471–cysteine 486. Laminin EGF-like domains lie at 280 to 335 (CKCN…ECLP), 336 to 391 (CNCS…PCQP), 392 to 438 (CDCH…GCRP), and 439 to 488 (CACN…GCSS). Asparagine 304 carries N-linked (GlcNAc...) asparagine glycosylation. Asparagine 337 carries an N-linked (GlcNAc...) asparagine glycan. The region spanning 489 to 498 (CFCYGHSKVC) is the Laminin EGF-like 5; first part domain. Residues 508-684 (HIRSDFRHGA…LAPPASWVET (177 aa)) form the Laminin IV type A domain. Asparagine 640 carries N-linked (GlcNAc...) asparagine glycosylation. The 34-residue stretch at 685 to 718 (CLCPQGYTGQFCEFCALGYKREIPHGGPYANCIP) folds into the Laminin EGF-like 5; second part domain. Cystine bridges form between cysteine 719/cysteine 727, cysteine 721/cysteine 734, cysteine 736/cysteine 745, cysteine 748/cysteine 764, cysteine 767/cysteine 775, cysteine 769/cysteine 786, cysteine 789/cysteine 798, cysteine 801/cysteine 819, cysteine 822/cysteine 836, cysteine 824/cysteine 843, cysteine 846/cysteine 855, cysteine 858/cysteine 875, cysteine 878/cysteine 891, cysteine 880/cysteine 898, cysteine 900/cysteine 909, cysteine 912/cysteine 925, cysteine 928/cysteine 940, cysteine 930/cysteine 947, cysteine 949/cysteine 958, cysteine 961/cysteine 973, cysteine 976/cysteine 988, cysteine 978/cysteine 994, cysteine 996/cysteine 1005, and cysteine 1008/cysteine 1021. Laminin EGF-like domains are found at residues 719-766 (CTCN…DCQP), 767-821 (CPCP…PCRR), 822-877 (CQCS…KCAP), 878-927 (CSCD…GCQS), 928-975 (CKCH…GCRD), and 976-1024 (CRCS…CQEC). A glycan (N-linked (GlcNAc...) asparagine) is linked at asparagine 849. Asparagine 991 is a glycosylation site (N-linked (GlcNAc...) asparagine). Positions 1025–1581 (PTCYALVKEE…LSSLPENCAS (557 aa)) are domain II and I. 2 coiled-coil regions span residues 1029 to 1046 (ALVK…MLME) and 1112 to 1153 (VHCA…LASL). Residues asparagine 1162 and asparagine 1196 are each glycosylated (N-linked (GlcNAc...) asparagine). A coiled-coil region spans residues 1208–1231 (RVASEAQQELEDRYQEVQAAQTAL). A glycan (N-linked (GlcNAc...) asparagine) is linked at asparagine 1320. The interval 1382–1413 (KRKTKQAERMLGNAASLSSSTKKKSKEAELMS) is disordered. 2 coiled-coil regions span residues 1438 to 1468 (ASQT…AKQV) and 1510 to 1575 (AQTL…LSSL). A glycan (N-linked (GlcNAc...) asparagine) is linked at asparagine 1514.

Laminin is a complex glycoprotein, consisting of three different polypeptide chains (alpha, beta, gamma), which are bound to each other by disulfide bonds into a cross-shaped molecule comprising one long and three short arms with globules at each end. Gamma-3 is a subunit of laminin-12 (laminin-213), laminin-14 (laminin-423) and laminin-15 (laminin-523). In terms of tissue distribution, strongly expressed in capillaries and arterioles of kidney as well as in interstitial Leydig cells of testis.

The protein localises to the secreted. Its subcellular location is the extracellular space. It localises to the extracellular matrix. It is found in the basement membrane. Binding to cells via a high affinity receptor, laminin is thought to mediate the attachment, migration and organization of cells into tissues during embryonic development by interacting with other extracellular matrix components. The sequence is that of Laminin subunit gamma-3 (Lamc3) from Mus musculus (Mouse).